A 110-amino-acid polypeptide reads, in one-letter code: Small ribosomal subunit protein eS25 (110 aa).

The disordered stretch occupies residues 1–37 (MGGASKKPISTMEKRLKKEAEKQQKAEEKKKGPSKTG). The segment covering 12 to 37 (MEKRLKKEAEKQQKAEEKKKGPSKTG) has biased composition (basic and acidic residues).

It belongs to the eukaryotic ribosomal protein eS25 family.

The chain is Small ribosomal subunit protein eS25 (rps25e) from Saccharolobus solfataricus (strain ATCC 35092 / DSM 1617 / JCM 11322 / P2) (Sulfolobus solfataricus).